We begin with the raw amino-acid sequence, 432 residues long: Chaperone SurA (432 aa).

A signal peptide spans 1-26 (MKKIASFCSAAVLIASSFLLNNTVQA). PpiC domains are found at residues 176-277 (QTEY…KVQD) and 286-386 (VQEV…EVTG).

The protein resides in the periplasm. It catalyses the reaction [protein]-peptidylproline (omega=180) = [protein]-peptidylproline (omega=0). Chaperone involved in the correct folding and assembly of outer membrane proteins. Recognizes specific patterns of aromatic residues and the orientation of their side chains, which are found more frequently in integral outer membrane proteins. May act in both early periplasmic and late outer membrane-associated steps of protein maturation. The polypeptide is Chaperone SurA (Idiomarina loihiensis (strain ATCC BAA-735 / DSM 15497 / L2-TR)).